The chain runs to 345 residues: Uroporphyrinogen decarboxylase (345 aa).

Substrate contacts are provided by residues 26-30 (RQAGR), F45, D75, Y151, S206, and H320.

The protein belongs to the uroporphyrinogen decarboxylase family. As to quaternary structure, homodimer.

Its subcellular location is the cytoplasm. The enzyme catalyses uroporphyrinogen III + 4 H(+) = coproporphyrinogen III + 4 CO2. Its pathway is porphyrin-containing compound metabolism; protoporphyrin-IX biosynthesis; coproporphyrinogen-III from 5-aminolevulinate: step 4/4. Its function is as follows. Catalyzes the decarboxylation of four acetate groups of uroporphyrinogen-III to yield coproporphyrinogen-III. The protein is Uroporphyrinogen decarboxylase of Staphylococcus carnosus (strain TM300).